The following is a 141-amino-acid chain: Hemoglobin subunit alpha-A (141 aa).

Positions 1–141 (VLTEEDKSRV…VAKTLVSRYR (141 aa)) constitute a Globin domain. His-58 is a binding site for O2. Heme b is bound at residue His-87.

Belongs to the globin family. As to quaternary structure, heterotetramer of two alpha chains and two beta chains. In terms of tissue distribution, red blood cells.

Functionally, involved in oxygen transport from the lung to the various peripheral tissues. The chain is Hemoglobin subunit alpha-A from Drymarchon melanurus erebennus (Texas indigo snake).